The primary structure comprises 236 residues: Leucyl/phenylalanyl-tRNA--protein transferase (236 aa).

It belongs to the L/F-transferase family.

The protein localises to the cytoplasm. It catalyses the reaction N-terminal L-lysyl-[protein] + L-leucyl-tRNA(Leu) = N-terminal L-leucyl-L-lysyl-[protein] + tRNA(Leu) + H(+). The enzyme catalyses N-terminal L-arginyl-[protein] + L-leucyl-tRNA(Leu) = N-terminal L-leucyl-L-arginyl-[protein] + tRNA(Leu) + H(+). It carries out the reaction L-phenylalanyl-tRNA(Phe) + an N-terminal L-alpha-aminoacyl-[protein] = an N-terminal L-phenylalanyl-L-alpha-aminoacyl-[protein] + tRNA(Phe). In terms of biological role, functions in the N-end rule pathway of protein degradation where it conjugates Leu, Phe and, less efficiently, Met from aminoacyl-tRNAs to the N-termini of proteins containing an N-terminal arginine or lysine. This chain is Leucyl/phenylalanyl-tRNA--protein transferase, found in Shewanella halifaxensis (strain HAW-EB4).